Reading from the N-terminus, the 495-residue chain is Probable cytochrome P450 513C1 (495 aa).

A helical transmembrane segment spans residues 1–21; that stretch reads MNYLVLILVSLVSIYFLFIKN. A heme-binding site is contributed by Cys441.

This sequence belongs to the cytochrome P450 family. Heme serves as cofactor.

It localises to the membrane. In Dictyostelium discoideum (Social amoeba), this protein is Probable cytochrome P450 513C1 (cyp513C1).